The sequence spans 141 residues: Translation initiation factor 2 subunit beta (141 aa).

This sequence belongs to the eIF-2-beta/eIF-5 family. In terms of assembly, heterotrimer composed of an alpha, a beta and a gamma chain.

Functionally, eIF-2 functions in the early steps of protein synthesis by forming a ternary complex with GTP and initiator tRNA. This is Translation initiation factor 2 subunit beta from Thermofilum pendens (strain DSM 2475 / Hrk 5).